We begin with the raw amino-acid sequence, 317 residues long: 2,3-dihydroxyphenylpropionate/2,3-dihydroxicinnamic acid 1,2-dioxygenase (317 aa).

Residue His-115 is the Proton donor of the active site. The Proton acceptor role is filled by His-179.

The protein belongs to the LigB/MhpB extradiol dioxygenase family. Homotetramer. Requires Fe(2+) as cofactor.

The enzyme catalyses 3-(2,3-dihydroxyphenyl)propanoate + O2 = (2Z,4E)-2-hydroxy-6-oxonona-2,4-dienedioate + H(+). It catalyses the reaction (2E)-3-(2,3-dihydroxyphenyl)prop-2-enoate + O2 = (2Z,4E,7E)-2-hydroxy-6-oxonona-2,4,7-trienedioate + H(+). It participates in aromatic compound metabolism; 3-phenylpropanoate degradation. In terms of biological role, catalyzes the non-heme iron(II)-dependent oxidative cleavage of 2,3-dihydroxyphenylpropionic acid and 2,3-dihydroxicinnamic acid into 2-hydroxy-6-ketononadienedioate and 2-hydroxy-6-ketononatrienedioate, respectively. The sequence is that of 2,3-dihydroxyphenylpropionate/2,3-dihydroxicinnamic acid 1,2-dioxygenase from Burkholderia vietnamiensis (strain G4 / LMG 22486) (Burkholderia cepacia (strain R1808)).